Reading from the N-terminus, the 309-residue chain is CDK-activating kinase assembly factor MAT1 (309 aa).

The segment at 6-50 (CPRCKTTKYRNPSLKLMVNVCGHTLCESCVELLFVRGSGSCQECD) adopts an RING-type zinc-finger fold. A UIM domain is found at 142–161 (REQEELEEALEMEKHENEQR).

In terms of assembly, associates with CDK7 and cyclin H.

It is found in the nucleus. Its function is as follows. Stabilizes the cyclin H-CDK7 complex to form a functional CDK-activating kinase (CAK) enzymatic complex. In Xenopus laevis (African clawed frog), this protein is CDK-activating kinase assembly factor MAT1 (mnat1).